Reading from the N-terminus, the 432-residue chain is Serine/threonine-protein phosphatase 2A activator 1 (432 aa).

Residues 322 to 432 (PYSKVEDEEP…MAPTKAPWAK (111 aa)) form a disordered region. Residues 366–389 (TVERLARRDGQRAAREKEEREDRA) are compositionally biased toward basic and acidic residues. Over residues 396 to 412 (TTGAPGATALPPTRAPG) the composition is skewed to low complexity.

It belongs to the PTPA-type PPIase family.

The protein localises to the cytoplasm. The protein resides in the nucleus. It catalyses the reaction [protein]-peptidylproline (omega=180) = [protein]-peptidylproline (omega=0). Its function is as follows. PPIases accelerate the folding of proteins. It catalyzes the cis-trans isomerization of proline imidic peptide bonds in oligopeptides. Acts as a regulatory subunit for PP2A-like phosphatases modulating their activity or substrate specificity, probably by inducing a conformational change in the catalytic subunit, a direct target of the PPIase. Can reactivate inactive phosphatase PP2A-phosphatase methylesterase complexes (PP2Ai) in presence of ATP and Mg(2+) by dissociating the inactive form from the complex. The sequence is that of Serine/threonine-protein phosphatase 2A activator 1 (RRD1) from Yarrowia lipolytica (strain CLIB 122 / E 150) (Yeast).